A 1534-amino-acid chain; its full sequence is Dicer-like protein 2 (1534 aa).

Residues 1–10 (MDQDPRKDNP) are compositionally biased toward basic and acidic residues. Residues 1–36 (MDQDPRKDNPVEMDVDRDDSSQDPDDNESFKSALDE) form a disordered region. Acidic residues predominate over residues 11-27 (VEMDVDRDDSSQDPDDN). Residues 65–249 (TPAALTARAY…IEKLEQVLDA (185 aa)) enclose the Helicase ATP-binding domain. 78-85 (MFEASLKQ) is an ATP binding site. Residues 192–195 (DEAH) carry the DEAH box motif. The Helicase C-terminal domain occupies 404–575 (KVQTLLKVLA…NAELELLDDP (172 aa)). Residues 597-700 (ARSHLNHFCA…LPTKVSDFLA (104 aa)) enclose the Dicer dsRNA-binding fold domain. RNase III domains lie at 959–1107 (MSLV…MCGG) and 1153–1353 (LEPL…VDSG). Residues Glu-1193, Asp-1339, and Glu-1342 each contribute to the Mg(2+) site. One can recognise a DRBM domain in the interval 1383-1483 (HPNVELQILA…AEKGCLVIKA (101 aa)). A compositionally biased stretch (basic and acidic residues) spans 1492–1504 (KAAAKEDKGHNTE). The interval 1492–1534 (KAAAKEDKGHNTENGDANADNGQSGEKEEVPDCRDADGDTVMN) is disordered. Over residues 1505 to 1515 (NGDANADNGQS) the composition is skewed to polar residues. The span at 1516–1528 (GEKEEVPDCRDAD) shows a compositional bias: basic and acidic residues.

The protein belongs to the helicase family. Dicer subfamily. The cofactor is Mg(2+). Mn(2+) serves as cofactor.

Functionally, dicer-like endonuclease involved in cleaving double-stranded RNA in the RNA interference (RNAi) pathway. Produces 21 to 25 bp dsRNAs (siRNAs) which target the selective destruction of homologous RNAs leading to sequence-specific suppression of gene expression, called post-transcriptional gene silencing (PTGS). Part of a broad host defense response against viral infection and transposons. Controls the expression of the non-LTR retrotransposon Tad in the African strain, Adiomopoume. This Neurospora crassa (strain ATCC 24698 / 74-OR23-1A / CBS 708.71 / DSM 1257 / FGSC 987) protein is Dicer-like protein 2 (dcl-2).